Consider the following 397-residue polypeptide: MSIKNPSVKFIIFVLMICTFSIGYTEYAVMGILTSIANDFHIQVSSAGLLVTAYAASVCLTGPLVTIISVKLPRKPVLLGLMAIFILSNLMSALAPNFAVLAISRILSASIHGAFFAIAMVFASEMVPPEKRAAAAASMNGGLTVALMLGVPFGSYLGDVLNWRAVFSIITALGVIGFLGLMAAVPNRKPKVIPMLMNEWGVFKHKQVLFSFAITILGYSGVFIAYTFIEPILRHSAGFSTVGITGALFAYGLGGVAGNFFAGKVPLPLLTRTMIGVMIGLIGVLAVFPYIAIYPAAAIVATFLFGACAFGTPPLLQTKVISSSEGGTTIAAAVSVSAFNLANALGAWIGGMILNGTGSYSWLFAGGALMTACGLVLSTFAHLSEKKSVYEYQVNKG.

A run of 12 helical transmembrane segments spans residues 10–30 (FIIFVLMICTFSIGYTEYAVM), 48–68 (GLLVTAYAASVCLTGPLVTII), 76–96 (PVLLGLMAIFILSNLMSALAP), 106–126 (ILSASIHGAFFAIAMVFASEM), 141–161 (GGLTVALMLGVPFGSYLGDVL), 165–185 (AVFSIITALGVIGFLGLMAAV), 209–229 (LFSFAITILGYSGVFIAYTFI), 242–262 (VGITGALFAYGLGGVAGNFFA), 274–294 (MIGVMIGLIGVLAVFPYIAIY), 296–316 (AAAIVATFLFGACAFGTPPLL), 334–354 (VSVSAFNLANALGAWIGGMIL), and 363–383 (LFAGGALMTACGLVLSTFAHL).

The protein belongs to the major facilitator superfamily.

It localises to the cell membrane. This is an uncharacterized protein from Bacillus subtilis (strain 168).